Here is a 92-residue protein sequence, read N- to C-terminus: Small ribosomal subunit protein uS19 (92 aa).

Belongs to the universal ribosomal protein uS19 family.

Functionally, protein S19 forms a complex with S13 that binds strongly to the 16S ribosomal RNA. This is Small ribosomal subunit protein uS19 from Phenylobacterium zucineum (strain HLK1).